Reading from the N-terminus, the 144-residue chain is Large ribosomal subunit protein uL15 (144 aa).

The disordered stretch occupies residues 1-44; sequence MKLNELMPSEGSRTNRKRIGRGTSSGTGKTAGRGQKGQKARGKV. A compositionally biased stretch (gly residues) spans 23-35; sequence TSSGTGKTAGRGQ.

This sequence belongs to the universal ribosomal protein uL15 family. As to quaternary structure, part of the 50S ribosomal subunit.

Functionally, binds to the 23S rRNA. This chain is Large ribosomal subunit protein uL15, found in Pediococcus pentosaceus (strain ATCC 25745 / CCUG 21536 / LMG 10740 / 183-1w).